Reading from the N-terminus, the 87-residue chain is Large ribosomal subunit protein bL31B (87 aa).

The protein belongs to the bacterial ribosomal protein bL31 family. Type B subfamily. As to quaternary structure, part of the 50S ribosomal subunit.

This chain is Large ribosomal subunit protein bL31B, found in Burkholderia thailandensis (strain ATCC 700388 / DSM 13276 / CCUG 48851 / CIP 106301 / E264).